Consider the following 385-residue polypeptide: Trans-enoyl reductase tasC (385 aa).

Residue 49–52 participates in NADP(+) binding; the sequence is VDTK. 136–143 serves as a coordination point for substrate; the sequence is NSWYTVAW. NADP(+) contacts are provided by residues 196–199, 219–222, and 284–285; these read SSST, SARN, and LD. 305 to 309 is a substrate binding site; the sequence is GPELM. 374-375 provides a ligand contact to NADP(+); the sequence is VS.

This sequence belongs to the zinc-containing alcohol dehydrogenase family. As to quaternary structure, monomer.

The catalysed reaction is (2S,4S)-4-hydroxy-4-methylglutamate + 8 malonyl-CoA + 3 S-adenosyl-L-methionine + ATP + 8 NADPH + 11 H(+) = (2S)-3-[(2S)-3,5-dioxo-4-[(2E,4R,6R,8E,10E,12E)-4,6,12-trimethyltetradeca-2,8,10,12-tetraenoyl]pyrrolidin-2-yl]-2-hydroxy-2-methylpropanoate + AMP + 3 S-adenosyl-L-homocysteine + 8 CO2 + diphosphate + 8 NADP(+) + 8 CoA + 6 H2O. It carries out the reaction (2S,4R)-4-hydroxy-4-methylglutamate + 8 malonyl-CoA + 3 S-adenosyl-L-methionine + ATP + 8 NADPH + 11 H(+) = (2R)-3-[(2S)-3,5-dioxo-4-[(2E,4R,6R,8E,10E,12E)-4,6,12-trimethyltetradeca-2,8,10,12-tetraenoyl]pyrrolidin-2-yl]-2-hydroxy-2-methylpropanoate + AMP + 3 S-adenosyl-L-homocysteine + 8 CO2 + diphosphate + 8 NADP(+) + 8 CoA + 6 H2O. It functions in the pathway secondary metabolite biosynthesis. Functionally, trans-enoyl reductase; part of the gene cluster that mediates the biosynthesis of the tetramic acids Sch210971 and Sch210972, potential anti-HIV fungal natural product that contain a decalin core. The PKS module of tasS together with the enoylreductase tasC catalyze the formation of the polyketide unit which is then conjugated to 4-hydroxyl-4-methyl glutamate (HMG) by the condensation domain of the tasS NRPS module. One unique structural feature of Sch210971 and Sch210972 is the tetramic acid motif proposed to be derived from the non-proteinogenic amino acid HMG, by a Dieckmann-type condensation catalyzed by the reductase domain of tasS. The aldolase tasA catalyzes the aldol condensation of 2 molecules of pyruvic acid to yield the intermediate 4-hydroxyl-4-methyl-2-oxoglutarate (HMOG), which can then be stereoselectively transaminated, may be by tasG, to form HMG. The Diels-Alderase tas3 then uses the Dieckmann product of tasS as substrate and catalyzes the Diels-Alder cycloaddition to form the decalin ring of Sch210971 and Sch210972. This Hapsidospora irregularis protein is Trans-enoyl reductase tasC.